Consider the following 302-residue polypeptide: MVTEQEVEAIGKTLVDSTQPLQARFRALFTLRGLGGPDAISWISRGFEDSSALLKHELAYCLGQMRDPRAIPVLVSVLQDRNQEPMVRHEAGEALGAIGNPKVLGLLKQYSTDPVVEVAETCQLAVRRLEWLQQHPGEATCAGPYLSVDPAPPAAEGDVGRLRETLLDEAQPLFERYRAMFALRNVGGKEAALALAEGLKCGSALFRHEVGYVLGQLQHEAAVSELAATLARTTESPMVRHECAEALGAIARPACLAALREYITDPERVVRESCEVALDMYEYENGQDFQYADGLERLRPPP.

Met1 is subject to N-acetylmethionine. HEAT-like PBS-type repeat units follow at residues 54–80 (LKHE…VLQD), 87–113 (VRHE…YSTD), 175–201 (ERYR…GLKC), 206–232 (FRHE…TLAR), and 239–265 (VRHE…YITD). Positions 56, 89, and 90 each coordinate Fe cation. Positions 208, 241, and 242 each coordinate Fe cation.

Belongs to the deoxyhypusine hydroxylase family. The cofactor is Fe(2+).

The enzyme catalyses [eIF5A protein]-deoxyhypusine + AH2 + O2 = [eIF5A protein]-hypusine + A + H2O. It functions in the pathway protein modification; eIF5A hypusination. Functionally, catalyzes the hydroxylation of the N(6)-(4-aminobutyl)-L-lysine intermediate produced by deoxyhypusine synthase/DHPS on a critical lysine of the eukaryotic translation initiation factor 5A/eIF-5A. This is the second step of the post-translational modification of that lysine into an unusual amino acid residue named hypusine. Hypusination is unique to mature eIF-5A factor and is essential for its function. The sequence is that of Deoxyhypusine hydroxylase (Dohh) from Rattus norvegicus (Rat).